The sequence spans 240 residues: Phosphoribosylaminoimidazole-succinocarboxamide synthase (240 aa).

Belongs to the SAICAR synthetase family.

It catalyses the reaction 5-amino-1-(5-phospho-D-ribosyl)imidazole-4-carboxylate + L-aspartate + ATP = (2S)-2-[5-amino-1-(5-phospho-beta-D-ribosyl)imidazole-4-carboxamido]succinate + ADP + phosphate + 2 H(+). Its pathway is purine metabolism; IMP biosynthesis via de novo pathway; 5-amino-1-(5-phospho-D-ribosyl)imidazole-4-carboxamide from 5-amino-1-(5-phospho-D-ribosyl)imidazole-4-carboxylate: step 1/2. This is Phosphoribosylaminoimidazole-succinocarboxamide synthase from Wolbachia sp. subsp. Brugia malayi (strain TRS).